The primary structure comprises 419 residues: Tetraspanning orphan receptor (419 aa).

Topologically, residues 1-28 (MPRAPALLTNDARHQFTCCLCLHVRTGT) are cytoplasmic. The helical transmembrane segment at 29-49 (IIFGITQIIIQLVFISFLFLM) threads the bilayer. The Extracellular segment spans residues 50-165 (TFNPRLIPED…EVKIKHFSPY (116 aa)). The helical transmembrane segment at 166–186 (IAVCVTTFSLAFCCFMVHGAI) threads the bilayer. At 187 to 193 (TKQPTHL) the chain is on the cytoplasmic side. A helical membrane pass occupies residues 194–214 (LPFFFIQVFDLIICLIHILGF). The Extracellular segment spans residues 215-240 (MSSTSDLRLMIHTKTGPIYIKSTGFT). Residues 241 to 261 (FIILSISCMMLAFKAYCLGMV) traverse the membrane as a helical segment. Over 262–419 (WDCYKYLMLN…SAPSNAHSSC (158 aa)) the chain is Cytoplasmic. Residues 303–316 (NNSIGNSGSPNEPN) are compositionally biased toward low complexity. The tract at residues 303 to 328 (NNSIGNSGSPNEPNTRPRPEPITYDP) is disordered.

Interacts (via N-terminal extracellular domain) with human C2a. In terms of processing, phosphorylated on tyrosine residues.

It localises to the cell membrane. Its function is as follows. Cell surface receptor that binds to human complement C2a protein. This results in inhibition of the classical and lectin pathways of complement activation, probably due to interference with binding of C2a to C4b and interference with cleavage by C1 or MASP2 such that C3 convertase cannot be formed. This infers resistance to complement-mediated cell lysis, allowing parasite survival and infection. The chain is Tetraspanning orphan receptor from Schistosoma mansoni (Blood fluke).